We begin with the raw amino-acid sequence, 346 residues long: Holliday junction branch migration complex subunit RuvB (346 aa).

The interval 1 to 182 (MSEAARLIAP…FGIPVRLNFY (182 aa)) is large ATPase domain (RuvB-L). ATP contacts are provided by residues arginine 22, glycine 63, lysine 66, threonine 67, threonine 68, 129-131 (EDF), arginine 172, tyrosine 182, and arginine 219. Threonine 67 lines the Mg(2+) pocket. Residues 183-253 (TVEELELIVR…IADEALTRLL (71 aa)) form a small ATPAse domain (RuvB-S) region. The tract at residues 256 to 346 (SMGLDQLDRR…SQFRLTLEDD (91 aa)) is head domain (RuvB-H). The DNA site is built by arginine 292, arginine 311, and arginine 316.

Belongs to the RuvB family. As to quaternary structure, homohexamer. Forms an RuvA(8)-RuvB(12)-Holliday junction (HJ) complex. HJ DNA is sandwiched between 2 RuvA tetramers; dsDNA enters through RuvA and exits via RuvB. An RuvB hexamer assembles on each DNA strand where it exits the tetramer. Each RuvB hexamer is contacted by two RuvA subunits (via domain III) on 2 adjacent RuvB subunits; this complex drives branch migration. In the full resolvosome a probable DNA-RuvA(4)-RuvB(12)-RuvC(2) complex forms which resolves the HJ.

It localises to the cytoplasm. The catalysed reaction is ATP + H2O = ADP + phosphate + H(+). The RuvA-RuvB-RuvC complex processes Holliday junction (HJ) DNA during genetic recombination and DNA repair, while the RuvA-RuvB complex plays an important role in the rescue of blocked DNA replication forks via replication fork reversal (RFR). RuvA specifically binds to HJ cruciform DNA, conferring on it an open structure. The RuvB hexamer acts as an ATP-dependent pump, pulling dsDNA into and through the RuvAB complex. RuvB forms 2 homohexamers on either side of HJ DNA bound by 1 or 2 RuvA tetramers; 4 subunits per hexamer contact DNA at a time. Coordinated motions by a converter formed by DNA-disengaged RuvB subunits stimulates ATP hydrolysis and nucleotide exchange. Immobilization of the converter enables RuvB to convert the ATP-contained energy into a lever motion, pulling 2 nucleotides of DNA out of the RuvA tetramer per ATP hydrolyzed, thus driving DNA branch migration. The RuvB motors rotate together with the DNA substrate, which together with the progressing nucleotide cycle form the mechanistic basis for DNA recombination by continuous HJ branch migration. Branch migration allows RuvC to scan DNA until it finds its consensus sequence, where it cleaves and resolves cruciform DNA. This is Holliday junction branch migration complex subunit RuvB from Rhizobium meliloti (strain 1021) (Ensifer meliloti).